A 390-amino-acid polypeptide reads, in one-letter code: Elongation factor Ts, mitochondrial (390 aa).

Belongs to the EF-Ts family.

Its subcellular location is the mitochondrion. Functionally, associates with the EF-Tu.GDP complex and induces the exchange of GDP to GTP. It remains bound to the aminoacyl-tRNA.EF-Tu.GTP complex up to the GTP hydrolysis stage on the ribosome. The chain is Elongation factor Ts, mitochondrial from Plasmodium vivax (strain Salvador I).